A 310-amino-acid chain; its full sequence is Oxygen-dependent coproporphyrinogen-III oxidase (310 aa).

Position 97 (Ser97) interacts with substrate. A divalent metal cation is bound by residues His101 and His111. His111 (proton donor) is an active-site residue. 113 to 115 (NFR) is a binding site for substrate. A divalent metal cation is bound by residues His150 and His180. Positions 245 to 280 (YVEFNLLYDRGTRFGLEFGGRTESILMSLPPRVVWR) are important for dimerization. 263-265 (GGR) contributes to the substrate binding site.

Belongs to the aerobic coproporphyrinogen-III oxidase family. In terms of assembly, homodimer. The cofactor is a divalent metal cation.

It localises to the cytoplasm. The catalysed reaction is coproporphyrinogen III + O2 + 2 H(+) = protoporphyrinogen IX + 2 CO2 + 2 H2O. It participates in porphyrin-containing compound metabolism; protoporphyrin-IX biosynthesis; protoporphyrinogen-IX from coproporphyrinogen-III (O2 route): step 1/1. Involved in the heme biosynthesis. Catalyzes the aerobic oxidative decarboxylation of propionate groups of rings A and B of coproporphyrinogen-III to yield the vinyl groups in protoporphyrinogen-IX. The sequence is that of Oxygen-dependent coproporphyrinogen-III oxidase from Coxiella burnetii (strain Dugway 5J108-111).